The chain runs to 383 residues: UDP-N-acetylglucosamine--N-acetylmuramyl-(pentapeptide) pyrophosphoryl-undecaprenol N-acetylglucosamine transferase (383 aa).

UDP-N-acetyl-alpha-D-glucosamine-binding positions include 11 to 13 (TGG), Asn125, Arg166, Ser191, Ile246, and Gln291. The segment at 364-383 (PNGRERTPIEAEKKAPRSNS) is disordered. Positions 366-383 (GRERTPIEAEKKAPRSNS) are enriched in basic and acidic residues.

The protein belongs to the glycosyltransferase 28 family. MurG subfamily.

The protein localises to the cell inner membrane. It carries out the reaction di-trans,octa-cis-undecaprenyl diphospho-N-acetyl-alpha-D-muramoyl-L-alanyl-D-glutamyl-meso-2,6-diaminopimeloyl-D-alanyl-D-alanine + UDP-N-acetyl-alpha-D-glucosamine = di-trans,octa-cis-undecaprenyl diphospho-[N-acetyl-alpha-D-glucosaminyl-(1-&gt;4)]-N-acetyl-alpha-D-muramoyl-L-alanyl-D-glutamyl-meso-2,6-diaminopimeloyl-D-alanyl-D-alanine + UDP + H(+). The protein operates within cell wall biogenesis; peptidoglycan biosynthesis. In terms of biological role, cell wall formation. Catalyzes the transfer of a GlcNAc subunit on undecaprenyl-pyrophosphoryl-MurNAc-pentapeptide (lipid intermediate I) to form undecaprenyl-pyrophosphoryl-MurNAc-(pentapeptide)GlcNAc (lipid intermediate II). The chain is UDP-N-acetylglucosamine--N-acetylmuramyl-(pentapeptide) pyrophosphoryl-undecaprenol N-acetylglucosamine transferase from Myxococcus xanthus (strain DK1622).